The following is a 151-amino-acid chain: IFN signaling evasion protein OPG029 (151 aa).

It belongs to the orthopoxvirus OPG029 family. Interacts with host TANK, TBKBP1 and AZI2; these interactions prevent interferon production. Interacts with host STAT2.

In terms of biological role, prevents establishment of cellular antiviral state by blocking virus-induced phosphorylation and activation of interferon regulatory factors 3/IRF3 and 7/IRF7, transcription factors critical for the induction of interferons alpha and beta. This blockage is produced through the inhibition of host TBK1, by binding host TBK1 adapter proteins TBKBP1 and AZI2, thereby producing a strong inhibition of the phosphorylation and activation of IRF3 and IRF7. Also acts as an inhibitor of the cellular response to type I IFN by interacting with host STAT2. Mechanistically, exerts its inhibitory effect after host ISGF3 complex (composed of STAT1, STAT2 and IRF9) binding to the interferon stimulated response element (ISRE). This chain is IFN signaling evasion protein OPG029 (OPG029), found in Vaccinia virus (strain Western Reserve) (VACV).